We begin with the raw amino-acid sequence, 172 residues long: Large ribosomal subunit protein uL10 (172 aa).

The protein belongs to the universal ribosomal protein uL10 family. As to quaternary structure, part of the ribosomal stalk of the 50S ribosomal subunit. The N-terminus interacts with L11 and the large rRNA to form the base of the stalk. The C-terminus forms an elongated spine to which L12 dimers bind in a sequential fashion forming a multimeric L10(L12)X complex.

Functionally, forms part of the ribosomal stalk, playing a central role in the interaction of the ribosome with GTP-bound translation factors. The sequence is that of Large ribosomal subunit protein uL10 (rplJ) from Caulobacter vibrioides (strain ATCC 19089 / CIP 103742 / CB 15) (Caulobacter crescentus).